A 169-amino-acid polypeptide reads, in one-letter code: Peptide deformylase (169 aa).

Residues cysteine 91 and histidine 133 each contribute to the Fe cation site. Glutamate 134 is a catalytic residue. Histidine 137 provides a ligand contact to Fe cation.

This sequence belongs to the polypeptide deformylase family. The cofactor is Fe(2+).

The catalysed reaction is N-terminal N-formyl-L-methionyl-[peptide] + H2O = N-terminal L-methionyl-[peptide] + formate. Functionally, removes the formyl group from the N-terminal Met of newly synthesized proteins. Requires at least a dipeptide for an efficient rate of reaction. N-terminal L-methionine is a prerequisite for activity but the enzyme has broad specificity at other positions. In Haemophilus influenzae (strain ATCC 51907 / DSM 11121 / KW20 / Rd), this protein is Peptide deformylase.